Consider the following 224-residue polypeptide: PKHD-type hydroxylase Shewmr4_3244 (224 aa).

The Fe2OG dioxygenase domain occupies 78-176; the sequence is QFYPPLFNRY…RTAAFMWLQS (99 aa). Positions 96, 98, and 157 each coordinate Fe cation. Residue arginine 167 participates in 2-oxoglutarate binding.

Fe(2+) is required as a cofactor. It depends on L-ascorbate as a cofactor.

The sequence is that of PKHD-type hydroxylase Shewmr4_3244 from Shewanella sp. (strain MR-4).